A 1505-amino-acid chain; its full sequence is Homeobox protein cut-like 1 (1505 aa).

The stretch at 56-407 (LLKSFQGEID…ALRISNSDLS (352 aa)) forms a coiled coil. Polar residues-rich tracts occupy residues 396–407 (NAALRISNSDLS) and 440–451 (EQASNTNGTHQF). Disordered regions lie at residues 396-455 (NAAL…SPAG), 512-552 (YSTN…EEMD), 646-669 (PKRR…GSDE), and 682-704 (LQVQ…NSDD). A compositionally biased stretch (low complexity) spans 516–546 (SISSQSPLQQSPDVNGMAPSPSQSESAGSVS). Position 540 is a phosphoserine (Glu-540). Positions 542 to 629 (AGSVSEGEEM…ILALRSIQGR (88 aa)) form a DNA-binding region, CUT 1. The span at 694–703 (SSASGSGNSD) shows a compositional bias: low complexity. Ser-763 carries the post-translational modification Phosphoserine. Residues 768-802 (SAAPEAGASALPNPPALKKEAQDAPGLDPQGAADC) are disordered. Residues Lys-785, Lys-811, and Lys-842 each participate in a glycyl lysine isopeptide (Lys-Gly) (interchain with G-Cter in SUMO2) cross-link. Basic and acidic residues predominate over residues 815–853 (GRSGAWKDHWWSAVQPERRNAASSEEAKAEETGGGKEKG). The tract at residues 815–930 (GRSGAWKDHW…KPTKPSVPPL (116 aa)) is disordered. 2 stretches are compositionally biased toward polar residues: residues 868–877 (SQLQGPSSSE) and 887–911 (SPYS…NSPL). Ser-909 carries the phosphoserine modification. Residues 934-1021 (QYEVYMYQEV…QGVLPVQGQQ (88 aa)) constitute a DNA-binding region (CUT 2). Residues 1036–1049 (LQQGCVSSESTPKT) are compositionally biased toward polar residues. The segment at 1036–1110 (LQQGCVSSES…QPTTPLPLSG (75 aa)) is disordered. A compositionally biased stretch (low complexity) spans 1050 to 1066 (SASCSPAPESPMSSSES). Residues Ser-1059 and Ser-1069 each carry the phosphoserine modification. A DNA-binding region (CUT 3) is located at residues 1117-1204 (QELVAMSPEL…VEKLMDMKRM (88 aa)). A disordered region spans residues 1210–1247 (MKRRHSSVSDSQPCEPPSVGTEYSQGASPQPQHQLKKP). A compositionally biased stretch (polar residues) spans 1230–1242 (TEYSQGASPQPQH). Residues 1244–1303 (LKKPRVVLAPEEKEALKRAYQQKPYPSPKTIEDLATQLNLKTSTVINWFHNYRSRIRREL) constitute a DNA-binding region (homeobox). The residue at position 1270 (Ser-1270) is a Phosphoserine. Lys-1284 participates in a covalent cross-link: Glycyl lysine isopeptide (Lys-Gly) (interchain with G-Cter in SUMO2). The disordered stretch occupies residues 1312-1480 (SQGQAGASDS…SRDNPLRKKK (169 aa)). The segment covering 1316-1333 (AGASDSPSARSGRAAPSS) has biased composition (low complexity). At Ser-1337 the chain carries Phosphoserine. 2 stretches are compositionally biased toward basic and acidic residues: residues 1353–1368 (EEPK…EVPR) and 1384–1394 (DDARDDDHEGG). Composition is skewed to low complexity over residues 1405-1436 (PASA…AAPS) and 1443-1455 (NSSS…RPSS). Ser-1455 is modified (phosphoserine). Over residues 1467-1476 (GARDSRDNPL) the composition is skewed to basic and acidic residues. Ser-1486 and Ser-1496 each carry phosphoserine.

The protein belongs to the CUT homeobox family. In terms of assembly, interacts with BANP. Interacts with SATB1 (via DNA-binding domains); the interaction inhibits the attachment of both proteins to DNA. In terms of processing, phosphorylated by PKA. As cells progress into S phase, a fraction of CUX1 molecules is proteolytically processed into N-terminally truncated proteins of 110 kDa by CTSL. Cell cycle-dependent processing of CUX1 serves to generate a CDP/Cux p110 with distinct DNA binding and transcriptional properties.

It is found in the nucleus. Its function is as follows. Transcription factor involved in the control of neuronal differentiation in the brain. Regulates dendrite development and branching, and dendritic spine formation in cortical layers II-III. Also involved in the control of synaptogenesis. In addition, it has probably a broad role in mammalian development as a repressor of developmentally regulated gene expression. May act by preventing binding of positively-activing CCAAT factors to promoters. Component of nf-munr repressor; binds to the matrix attachment regions (MARs) (5' and 3') of the immunoglobulin heavy chain enhancer. Represses T-cell receptor (TCR) beta enhancer function by binding to MARbeta, an ATC-rich DNA sequence located upstream of the TCR beta enhancer. Binds to the TH enhancer; may require the basic helix-loop-helix protein TCF4 as a coactivator. In terms of biological role, plays a role in cell cycle progression, in particular at the G1/S transition. As cells progress into S phase, a fraction of CUX1 molecules is proteolytically processed into N-terminally truncated proteins of 110 kDa. While CUX1 only transiently binds to DNA and carries the CCAAT-displacement activity, CDP/Cux p110 makes a stable interaction with DNA and stimulates expression of genes such as POLA1. This Homo sapiens (Human) protein is Homeobox protein cut-like 1.